A 364-amino-acid polypeptide reads, in one-letter code: Anthranilate phosphoribosyltransferase (364 aa).

Residues Gly-101, 104–105 (GD), Thr-109, 111–114 (NLST), 129–137 (KHGNRAASS), and Gly-141 each bind 5-phospho-alpha-D-ribose 1-diphosphate. Gly-101 is a binding site for anthranilate. Ser-113 lines the Mg(2+) pocket. Asn-132 provides a ligand contact to anthranilate. Arg-187 provides a ligand contact to anthranilate. Mg(2+) is bound by residues Asp-245 and Glu-246.

The protein belongs to the anthranilate phosphoribosyltransferase family. In terms of assembly, homodimer. Requires Mg(2+) as cofactor.

The enzyme catalyses N-(5-phospho-beta-D-ribosyl)anthranilate + diphosphate = 5-phospho-alpha-D-ribose 1-diphosphate + anthranilate. The protein operates within amino-acid biosynthesis; L-tryptophan biosynthesis; L-tryptophan from chorismate: step 2/5. In terms of biological role, catalyzes the transfer of the phosphoribosyl group of 5-phosphorylribose-1-pyrophosphate (PRPP) to anthranilate to yield N-(5'-phosphoribosyl)-anthranilate (PRA). The chain is Anthranilate phosphoribosyltransferase from Mycolicibacterium vanbaalenii (strain DSM 7251 / JCM 13017 / BCRC 16820 / KCTC 9966 / NRRL B-24157 / PYR-1) (Mycobacterium vanbaalenii).